Consider the following 371-residue polypeptide: MLLVSTVSAVPGLFSPPSSPSNSSQEELLDDRDPLLVRAELALLSTIFVAVALSNGLVLGALIRRGRRGRWAPMHVFISHLCLADLAVALFQVLPQLAWDATDRFHGPDALCRAVKYLQMVGMYASSYMILAMTLDRHRAICRPMLAYRHGGGARWNRPVLVAWAFSLLLSLPQLFIFAQRDVGNGSGVFDCWARFAEPWGLRAYVTWIALMVFVAPALGIAACQVLIFREIHASLVPGPSERAGRRRRGRRTGSPSEGAHVSAAMAKTVRMTLVIVIVYVLCWAPFFLVQLWAAWDPEAPLERPPFVLLMLLASLNSCTNPWIYASFSSSVSSELRSLLCCAQRHTTHSLGPQDESCATASSSLMKDTPS.

At Met-1 to Arg-38 the chain is on the extracellular side. Asn-22 carries N-linked (GlcNAc...) asparagine glycosylation. The helical transmembrane segment at Ala-39 to Ile-63 threads the bilayer. Residues Arg-64–Phe-77 lie on the Cytoplasmic side of the membrane. Residues Ile-78–Ala-98 traverse the membrane as a helical segment. Residues Trp-99 to Arg-113 lie on the Extracellular side of the membrane. Residues Ala-114 to Leu-135 traverse the membrane as a helical segment. At Asp-136–Pro-159 the chain is on the cytoplasmic side. A helical membrane pass occupies residues Val-160 to Gln-180. The Extracellular portion of the chain corresponds to Arg-181–Trp-200. Asn-185 carries an N-linked (GlcNAc...) asparagine glycan. Residues Gly-201–Gly-220 form a helical membrane-spanning segment. The Cytoplasmic portion of the chain corresponds to Ile-221–Arg-271. A disordered region spans residues Pro-240–Ala-260. A helical membrane pass occupies residues Met-272–Trp-293. Over Ala-294 to Val-308 the chain is Extracellular. A helical transmembrane segment spans residues Leu-309–Phe-328. Residues Ser-329–Ser-371 are Cytoplasmic-facing. Residues Cys-341 and Cys-342 are each lipidated (S-palmitoyl cysteine). Residues His-349–Ser-371 are disordered. The segment covering Ser-357–Ser-371 has biased composition (polar residues).

This sequence belongs to the G-protein coupled receptor 1 family. Vasopressin/oxytocin receptor subfamily. As to quaternary structure, interacts with ARRDC4. Identified in a complex containing at least ARRDC4, V2R and HGS. Interacts with TMEM147. As to expression, kidney.

It is found in the cell membrane. Functionally, receptor for arginine vasopressin. The activity of this receptor is mediated by G proteins which activate adenylate cyclase. Involved in renal water reabsorption. The polypeptide is Vasopressin V2 receptor (Avpr2) (Rattus norvegicus (Rat)).